A 110-amino-acid chain; its full sequence is MFGGKGGLGNLMKQAQQMQEKMQKMQEEIAQLEVTGESGAGLVKVTINGAHNCRRVEIDPSLLEDDKEMLEDLVAAAFNDAARRIEETQKEKMASVSAGMQLPPGFKMPF.

It belongs to the YbaB/EbfC family. As to quaternary structure, homodimer.

The protein localises to the cytoplasm. It localises to the nucleoid. In terms of biological role, binds to DNA and alters its conformation. May be involved in regulation of gene expression, nucleoid organization and DNA protection. This chain is Nucleoid-associated protein KPN78578_04440, found in Klebsiella pneumoniae subsp. pneumoniae (strain ATCC 700721 / MGH 78578).